We begin with the raw amino-acid sequence, 354 residues long: Tyrosine recombinase XerH (354 aa).

The region spanning 48–134 is the Core-binding (CB) domain; it reads LTKGVKNIDE…AVINFFDFLD (87 aa). Residues 163–346 enclose the Tyr recombinase domain; sequence KLPEFMSKEE…DNDKLKLAAQ (184 aa). Catalysis depends on residues R205, K231, H298, R301, and H324. Y333 functions as the O-(3'-phospho-DNA)-tyrosine intermediate in the catalytic mechanism.

Belongs to the 'phage' integrase family. XerH subfamily.

The protein resides in the cytoplasm. With respect to regulation, ftsK is required for efficient recombination. Its function is as follows. Site-specific tyrosine recombinase, which acts by catalyzing the cutting and rejoining of the recombining DNA molecules. Binds to the complete atypical dif motif (difH) site and to both halves separately. In Campylobacter jejuni subsp. jejuni serotype O:2 (strain ATCC 700819 / NCTC 11168), this protein is Tyrosine recombinase XerH.